The sequence spans 603 residues: Aspartate--tRNA(Asp/Asn) ligase (603 aa).

The tract at residues 205–208 is aspartate; it reads QLFK. Arginine 227 contacts L-aspartate. Residues 227-229 and glutamine 236 contribute to the ATP site; that span reads RDE. Histidine 463 contacts L-aspartate. Glutamate 497 provides a ligand contact to ATP. Arginine 504 contributes to the L-aspartate binding site. 549-552 lines the ATP pocket; the sequence is GMDR.

This sequence belongs to the class-II aminoacyl-tRNA synthetase family. Type 1 subfamily. In terms of assembly, homodimer.

Its subcellular location is the cytoplasm. The catalysed reaction is tRNA(Asx) + L-aspartate + ATP = L-aspartyl-tRNA(Asx) + AMP + diphosphate. Its function is as follows. Aspartyl-tRNA synthetase with relaxed tRNA specificity since it is able to aspartylate not only its cognate tRNA(Asp) but also tRNA(Asn). Reaction proceeds in two steps: L-aspartate is first activated by ATP to form Asp-AMP and then transferred to the acceptor end of tRNA(Asp/Asn). In Anaeromyxobacter dehalogenans (strain 2CP-1 / ATCC BAA-258), this protein is Aspartate--tRNA(Asp/Asn) ligase.